The chain runs to 291 residues: Taste receptor type 2 member 16 (291 aa).

Methionine 1 is a topological domain (extracellular). A helical membrane pass occupies residues 2–22 (IPIQLTVFFMIIYVLESLTII). Topologically, residues 23–41 (VQSSLIVAVLGREWLQVRR) are cytoplasmic. The chain crosses the membrane as a helical span at residues 42-62 (LMPVDMILISLGISRFCLQWA). The Extracellular segment spans residues 63 to 84 (SMLNBFCSYFNLNYVLCNLTIT). Asparagine 80 is a glycosylation site (N-linked (GlcNAc...) asparagine). A helical membrane pass occupies residues 85–105 (WEFFNILTFWLNSLLTVFYCI). Residues 106 to 125 (KVSSFTHHIFLWLRWRILRL) lie on the Cytoplasmic side of the membrane. The helical transmembrane segment at 126–146 (FPWILLGSLMITCVTIIPSAI) threads the bilayer. The Extracellular portion of the chain corresponds to 147–182 (GNYIQIQLLTMEHLPRNSTVTDKLEKFHQYEFQAHT). Residue asparagine 163 is glycosylated (N-linked (GlcNAc...) asparagine). The chain crosses the membrane as a helical span at residues 183-203 (VALVIPFILFLASTILLMASL). The Cytoplasmic segment spans residues 204-228 (TKQIQHHSTGHCNPSMKAHFTALRS). The helical transmembrane segment at 229-249 (LAVLFIVFTSYFLTILITIIG) threads the bilayer. The Extracellular segment spans residues 250–257 (TLFDRRCW). Residues 258 to 278 (LWVWEAFVYAFILMHSTSLML) traverse the membrane as a helical segment. The Cytoplasmic segment spans residues 279–291 (SSPTLKRILKGKC).

This sequence belongs to the G-protein coupled receptor T2R family. Interacts with RTP3 and RTP4.

It is found in the cell membrane. Receptor that may play a role in the perception of bitterness and is gustducin-linked. May play a role in sensing the chemical composition of the gastrointestinal content. The activity of this receptor may stimulate alpha gustducin, mediate PLC-beta-2 activation and lead to the gating of TRPM5. This Gorilla gorilla gorilla (Western lowland gorilla) protein is Taste receptor type 2 member 16 (TAS2R16).